The following is a 742-amino-acid chain: Ferric enterobactin receptor PirA (742 aa).

Residues 1 to 28 form the signal peptide; that stretch reads MYPQFRRGHLAAAVLFASSSLLGGQALA. A TBDR plug domain is found at 57–184; that stretch reads QELKQAPGVS…AGGVVNIITK (128 aa). 2 disordered regions span residues 91 to 112 and 409 to 435; these read GVNLTGNSSSGQRGNNRQIDIR and SSLKQGFVGSDSLPGTPAAGSRSPKSK. The span at 94-108 shows a compositional bias: polar residues; sequence LTGNSSSGQRGNNRQ. Residues 189–742 form the TBDR beta-barrel domain; it reads RLRGSMTVFT…AYYVSMTTSF (554 aa). Cysteines 516 and 525 form a disulfide. Positions 725-742 match the TonB C-terminal box motif; it reads ATYNEPGRAYYVSMTTSF.

The protein belongs to the TonB-dependent receptor family.

The protein resides in the cell outer membrane. Specific receptor for the siderophore ferric enterobactin. Probably involved in the transport of siderophores, including host catecholamines such as L-DOPA. In Pseudomonas aeruginosa (strain ATCC 15692 / DSM 22644 / CIP 104116 / JCM 14847 / LMG 12228 / 1C / PRS 101 / PAO1), this protein is Ferric enterobactin receptor PirA.